Consider the following 377-residue polypeptide: tRNA-specific 2-thiouridylase MnmA (377 aa).

ATP is bound by residues 8–15 and Met34; that span reads GMSGGVDS. Residues 94 to 96 are interaction with target base in tRNA; it reads NPD. Catalysis depends on Cys99, which acts as the Nucleophile. Cys99 and Cys201 are joined by a disulfide. Gly123 is an ATP binding site. The segment at 151–153 is interaction with tRNA; that stretch reads KDQ. Cys201 (cysteine persulfide intermediate) is an active-site residue. The tract at residues 315–316 is interaction with tRNA; it reads RY.

It belongs to the MnmA/TRMU family.

It is found in the cytoplasm. The enzyme catalyses S-sulfanyl-L-cysteinyl-[protein] + uridine(34) in tRNA + AH2 + ATP = 2-thiouridine(34) in tRNA + L-cysteinyl-[protein] + A + AMP + diphosphate + H(+). In terms of biological role, catalyzes the 2-thiolation of uridine at the wobble position (U34) of tRNA, leading to the formation of s(2)U34. This is tRNA-specific 2-thiouridylase MnmA from Acinetobacter baumannii (strain SDF).